The following is a 200-amino-acid chain: Ciliary neurotrophic factor (200 aa).

It belongs to the CNTF family. In terms of tissue distribution, nervous system.

Its subcellular location is the cytoplasm. In terms of biological role, CNTF is a survival factor for various neuronal cell types. Seems to prevent the degeneration of motor axons after axotomy. The chain is Ciliary neurotrophic factor (CNTF) from Sus scrofa (Pig).